A 308-amino-acid chain; its full sequence is Isochorismatase domain-containing protein 1 (308 aa).

The protein belongs to the isochorismatase family.

The sequence is that of Isochorismatase domain-containing protein 1 (isoc1) from Xenopus tropicalis (Western clawed frog).